We begin with the raw amino-acid sequence, 316 residues long: GPI-specific phospholipase A2-like PGAP3 (316 aa).

The first 19 residues, Met1–Gly19, serve as a signal peptide directing secretion. At Asp20–Cys97 the chain is on the lumenal side. Asn36 carries an N-linked (GlcNAc...) asparagine glycan. Residues Phe98–Leu118 traverse the membrane as a helical segment. Topologically, residues Leu119–Met131 are cytoplasmic. The helical transmembrane segment at Tyr132–Phe152 threads the bilayer. Residues His153–Tyr165 lie on the Lumenal side of the membrane. A helical transmembrane segment spans residues Phe166–Leu186. Residues Arg187–Met194 are Cytoplasmic-facing. The helical transmembrane segment at Val195 to Phe215 threads the bilayer. Over Asp216 to Asn220 the chain is Lumenal. The helical transmembrane segment at Met221–Leu241 threads the bilayer. Residues Asn242–Met254 lie on the Cytoplasmic side of the membrane. A helical transmembrane segment spans residues Val255–Trp275. Topologically, residues Val276–Asp278 are lumenal. A helical membrane pass occupies residues Ala279–Ile299. Residues Asp300 to Asp316 are Cytoplasmic-facing.

The protein belongs to the PGAP3 family.

The protein localises to the golgi apparatus membrane. In terms of biological role, involved in the fatty acid remodeling steps of GPI-anchor maturation where the unsaturated acyl chain at sn-2 of inositol phosphate is replaced by a saturated stearoyl chain. May catalyze the first step of the fatty acid remodeling, by removing the unsaturated acyl chain at sn-2 of inositol phosphate, generating a lyso-GPI intermediate. The fatty acid remodeling steps is critical for the integration of GPI-APs into lipid rafts. This chain is GPI-specific phospholipase A2-like PGAP3, found in Danio rerio (Zebrafish).